The chain runs to 573 residues: MSIAESTVLGEEPEWFRTAVFYEVLVRSFRDPNAGGTGDFRGLAEKLDYLQWLGVDCLWVPPFFSSPLRDGGYDVADYTGILPEIGTVEDFHAFLDGAHERGIRVIIDFVMNHTSDAHPWFQASRSDPDGPYGDFYVWSDTDELYQDARVIFVDTEPSNWTWDQTRGQYYWHRFFHHQPDLNFDNPKVQDAMLEAMAFWLDMGLDGFRLDAVPYLYERPGTNGENLPETHEMLKRVRRFVDDNYPDRVLLYEANQWPTDVVEYFGPEEREDGTVVGPESHMAFHFPVMPRIFMAVRRESRFPISEIMEQTPAIPEGCQWGIFLRNHDELTLEMVTDEDRDYMWGEYAKDPRMKANIGIRRRLAPLLDNDTNQIELFTALLLSLPGSPVLYYGDEIGMGDNIWLGDRDGVRTPMQRTPDRNVGFSAATPGKLHLPTIQDPVYGYQSVNVEAQLENPSSLLHWTRRMIHIRRQRDAFGLGTFEDLGGSNPAVLSYVRELPGDGGDDVILCVNNLSRFPQPVELDLRKYEGRVPVELIGGVPFPAVGELPYLLTLSGHGFYWFRLTDPDTTGRPVL.

D70 lines the substrate pocket. Residue N112 participates in Ca(2+) binding. The substrate site is built by H113 and Q178. Residue D180 coordinates Ca(2+). R208 is a binding site for substrate. The active-site Nucleophile is D210. Residues Y214, L215, and E217 each contribute to the Ca(2+) site. The active-site Proton donor is the E252. Residues H326 and D327 each coordinate substrate.

This sequence belongs to the glycosyl hydrolase 13 family. TreS subfamily.

It carries out the reaction D-maltose = alpha,alpha-trehalose. Its function is as follows. Catalyzes the reversible interconversion of maltose and alpha,alpha-trehalose by transglucosylation. This chain is Trehalose synthase (treS), found in Pimelobacter sp. (strain R48).